The following is a 334-amino-acid chain: Glutaredoxin-3 (334 aa).

Ala2 bears the N-acetylalanine mark. Residues 2-116 (AGGAAEAAAA…LTKKVQRHAS (115 aa)) form the Thioredoxin domain. The segment at 110–131 (KVQRHASSGSFSPSGSEHPKED) is disordered. Phosphoserine is present on residues Ser116 and Ser119. A compositionally biased stretch (low complexity) spans 116–125 (SSGSFSPSGS). Glutaredoxin domains follow at residues 145 to 235 (CMLF…PKLE) and 236 to 334 (ERLK…KGEN). Residues Cys158 and Cys260 each coordinate [2Fe-2S] cluster.

Homodimer; the homodimer is independent of 2Fe-2S clusters. Heterotrimer; forms a heterotrimeric complex composed by two BOLA2 molecules and one GLRX3 molecule; linked by [2Fe-2S] clusters. Interacts (via N-terminus) with PRKCQ/PKC-theta. Interacts (via C-terminus) with CSRP3. Interacts with CSRP2.

Its subcellular location is the cytoplasm. It is found in the cytosol. It localises to the cell cortex. The protein resides in the myofibril. The protein localises to the sarcomere. Its subcellular location is the z line. Its function is as follows. Together with BOLA2, acts as a cytosolic iron-sulfur (Fe-S) cluster assembly factor that facilitates [2Fe-2S] cluster insertion into a subset of cytosolic proteins. Acts as a critical negative regulator of cardiac hypertrophy and a positive inotropic regulator. Required for hemoglobin maturation. Does not possess any thyoredoxin activity since it lacks the conserved motif that is essential for catalytic activity. This chain is Glutaredoxin-3 (GLRX3), found in Bos taurus (Bovine).